A 429-amino-acid polypeptide reads, in one-letter code: Enolase (429 aa).

Glutamine 163 provides a ligand contact to (2R)-2-phosphoglycerate. Glutamate 205 acts as the Proton donor in catalysis. Mg(2+)-binding residues include aspartate 242, glutamate 285, and aspartate 312. (2R)-2-phosphoglycerate-binding residues include lysine 337, arginine 366, serine 367, and lysine 388. The Proton acceptor role is filled by lysine 337.

Belongs to the enolase family. The cofactor is Mg(2+).

The protein localises to the cytoplasm. It is found in the secreted. It localises to the cell surface. It carries out the reaction (2R)-2-phosphoglycerate = phosphoenolpyruvate + H2O. It participates in carbohydrate degradation; glycolysis; pyruvate from D-glyceraldehyde 3-phosphate: step 4/5. Functionally, catalyzes the reversible conversion of 2-phosphoglycerate (2-PG) into phosphoenolpyruvate (PEP). It is essential for the degradation of carbohydrates via glycolysis. The polypeptide is Enolase (Methylorubrum extorquens (strain CM4 / NCIMB 13688) (Methylobacterium extorquens)).